A 118-amino-acid chain; its full sequence is MLLTMLKAKLHRATVTQADLDYEGSIAIDRDLLDASGILPNEQVDVLNITNGARFTTYAIEAPRGSKVIGVNGAAARLVQKNDLVIVVTYCQMPAEEARNYAPTVVLLDEGNLIKKAA.

The active-site Schiff-base intermediate with substrate; via pyruvic acid is the Ser-25. At Ser-25 the chain carries Pyruvic acid (Ser). Substrate is bound at residue Thr-57. The Proton donor role is filled by Tyr-58. A substrate-binding site is contributed by 73–75 (GAA).

It belongs to the PanD family. Heterooctamer of four alpha and four beta subunits. The cofactor is pyruvate. Post-translationally, is synthesized initially as an inactive proenzyme, which is activated by self-cleavage at a specific serine bond to produce a beta-subunit with a hydroxyl group at its C-terminus and an alpha-subunit with a pyruvoyl group at its N-terminus.

It localises to the cytoplasm. It catalyses the reaction L-aspartate + H(+) = beta-alanine + CO2. Its pathway is cofactor biosynthesis; (R)-pantothenate biosynthesis; beta-alanine from L-aspartate: step 1/1. Functionally, catalyzes the pyruvoyl-dependent decarboxylation of aspartate to produce beta-alanine. This is Aspartate 1-decarboxylase from Caulobacter vibrioides (strain ATCC 19089 / CIP 103742 / CB 15) (Caulobacter crescentus).